The primary structure comprises 61 residues: Small ribosomal subunit protein uS14 (61 aa).

4 residues coordinate Zn(2+): cysteine 24, cysteine 27, cysteine 40, and cysteine 43.

Belongs to the universal ribosomal protein uS14 family. Zinc-binding uS14 subfamily. As to quaternary structure, part of the 30S ribosomal subunit. Contacts proteins S3 and S10. Zn(2+) is required as a cofactor.

In terms of biological role, binds 16S rRNA, required for the assembly of 30S particles and may also be responsible for determining the conformation of the 16S rRNA at the A site. The sequence is that of Small ribosomal subunit protein uS14 from Nitratidesulfovibrio vulgaris (strain ATCC 29579 / DSM 644 / CCUG 34227 / NCIMB 8303 / VKM B-1760 / Hildenborough) (Desulfovibrio vulgaris).